The primary structure comprises 309 residues: Intron-encoded DNA endonuclease ai2a (309 aa).

The protein belongs to the LAGLIDADG endonuclease family.

It is found in the mitochondrion. Functionally, mitochondrial DNA endonuclease involved in intron homing. Cleaves only one strand of intronless DNA sequence at the site which coincides with the I-SceII cleavage recognition site. The protein is Intron-encoded DNA endonuclease ai2a (ai2a) of Dictyostelium discoideum (Social amoeba).